A 213-amino-acid chain; its full sequence is Ribulose-phosphate 3-epimerase (213 aa).

Serine 9 contacts substrate. 3 residues coordinate a divalent metal cation: histidine 34, aspartate 36, and histidine 66. Aspartate 36 functions as the Proton acceptor in the catalytic mechanism. Substrate is bound by residues histidine 66, glycine 139–glycine 142, aspartate 166–glycine 168, and glycine 186–serine 187. Residue aspartate 166 coordinates a divalent metal cation. Aspartate 166 (proton donor) is an active-site residue.

This sequence belongs to the ribulose-phosphate 3-epimerase family. Requires Co(2+) as cofactor. The cofactor is Fe(2+). Mn(2+) serves as cofactor. Zn(2+) is required as a cofactor.

The catalysed reaction is D-ribulose 5-phosphate = D-xylulose 5-phosphate. Its pathway is carbohydrate degradation; pentose phosphate pathway; D-xylulose 5-phosphate from D-ribulose 5-phosphate (non-oxidative stage): step 1/1. Catalyzes the reversible epimerization of D-ribulose 5-phosphate to D-xylulose 5-phosphate. This is Ribulose-phosphate 3-epimerase (RPE1) from Encephalitozoon cuniculi (strain GB-M1) (Microsporidian parasite).